A 557-amino-acid chain; its full sequence is Aerobic glycerol-3-phosphate dehydrogenase (557 aa).

21-49 contacts FAD; it reads DVVIIGGGITGAGIALDASQRGMKVALVE.

It belongs to the FAD-dependent glycerol-3-phosphate dehydrogenase family. FAD serves as cofactor.

It is found in the cytoplasm. It carries out the reaction a quinone + sn-glycerol 3-phosphate = dihydroxyacetone phosphate + a quinol. The protein operates within polyol metabolism; glycerol degradation via glycerol kinase pathway; glycerone phosphate from sn-glycerol 3-phosphate (aerobic route): step 1/1. The polypeptide is Aerobic glycerol-3-phosphate dehydrogenase (glpD) (Staphylococcus haemolyticus (strain JCSC1435)).